The primary structure comprises 387 residues: EARP-interacting protein homolog (387 aa).

4 WD repeats span residues 132–172, 182–222, 226–266, and 270–310; these read TAHG…TKSV, KGQL…QIYC, AHGQ…EPVK, and EHSH…SEPF. The interval 311 to 339 is disordered; the sequence is GHLVDDEDLSDQEDNPQEEKTKEPLQDSI. A compositionally biased stretch (acidic residues) spans 315–326; the sequence is DDEDLSDQEDNP. One copy of the WD 5 repeat lies at 345–385; it reads EHEDSVYAVEWSSADPWLFASLSYDGRLVINRVPRALKYNI.

The protein belongs to the WD repeat EIPR1 family.

It is found in the golgi apparatus. It localises to the trans-Golgi network. Functionally, may act as a component of endosomal retrieval machinery that is involved in protein transport from early endosomes to either recycling endosomes or the trans-Golgi network. In Xenopus laevis (African clawed frog), this protein is EARP-interacting protein homolog.